The sequence spans 89 residues: C-C motif chemokine 18 (89 aa).

Residues 1–20 (MKGLAAALLVLVCTMALCSC) form the signal peptide. 2 disulfides stabilise this stretch: cysteine 30–cysteine 54 and cysteine 31–cysteine 70.

The protein belongs to the intercrine beta (chemokine CC) family. Post-translationally, the Cys-30/Cys-54 disulfide bond is required for activity. In terms of tissue distribution, expressed at high levels in lung, lymph nodes, placenta, bone marrow, dendritic cells present in germinal centers and T-cell areas of secondary lymphoid organs and macrophages derived from peripheral blood monocytes. Not expressed by peripheral blood monocytes and a monocyte-to-macrophage differentiation is a prerequisite for expression. Expressed in synovial fluids from patients with rheumatoid and septic arthritis and in ovarian carcinoma ascitic fluid.

The protein resides in the secreted. Its function is as follows. Chemotactic factor that attracts lymphocytes but not monocytes or granulocytes. May be involved in B-cell migration into B-cell follicles in lymph nodes. Attracts naive T-lymphocytes toward dendritic cells and activated macrophages in lymph nodes, has chemotactic activity for naive T-cells, CD4+ and CD8+ T-cells and thus may play a role in both humoral and cell-mediated immunity responses. The polypeptide is C-C motif chemokine 18 (CCL18) (Homo sapiens (Human)).